We begin with the raw amino-acid sequence, 106 residues long: Large ribosomal subunit protein eL42 (106 aa).

This sequence belongs to the eukaryotic ribosomal protein eL42 family.

The polypeptide is Large ribosomal subunit protein eL42 (RPL44) (Yarrowia lipolytica (strain CLIB 122 / E 150) (Yeast)).